A 282-amino-acid polypeptide reads, in one-letter code: uncharacterized protein (282 aa).

Positions 2–78 (TDVLAVIREM…IKIAVSLAKQ (77 aa)) constitute an HTH rpiR-type domain. Positions 38–57 (VNELANACDTSEASIIRFCR) form a DNA-binding region, H-T-H motif. In terms of domain architecture, SIS spans 122 to 262 (AAEALANANK…FILVAQKKYN (141 aa)).

This is an uncharacterized protein from Caldanaerobacter subterraneus subsp. tengcongensis (strain DSM 15242 / JCM 11007 / NBRC 100824 / MB4) (Thermoanaerobacter tengcongensis).